A 74-amino-acid polypeptide reads, in one-letter code: EMBRYO SURROUNDING FACTOR 1-like protein 4 (74 aa).

The signal sequence occupies residues 1-22 (MKSSHAYLVCILLLSLFSLHQC). 4 cysteine pairs are disulfide-bonded: C36–C51, C41–C70, C49–C66, and C52–C59.

It belongs to the MEG family. Expressed in flowers.

The chain is EMBRYO SURROUNDING FACTOR 1-like protein 4 (ESFL4) from Arabidopsis thaliana (Mouse-ear cress).